The sequence spans 142 residues: COA8 family protein CBG23705, mitochondrial (142 aa).

The protein belongs to the COA8 family.

The protein localises to the mitochondrion inner membrane. Its function is as follows. May be required for cytochrome c complex (COX) assembly and function, COX being the terminal component of the mitochondrial respiratory chain. This chain is COA8 family protein CBG23705, mitochondrial, found in Caenorhabditis briggsae.